A 210-amino-acid chain; its full sequence is MHLNQLVISHLACERGENRLFEGCHFSVSSGEWVQIEGHNGIGKTSLLRILAGLALPVAGEVLWNNLSIHKQRDEYYAELFYLGHYAGIKPELSAWENLRFYQKMQGLSLDDEALWFALDKVSLVERADLPCSYLSAGQQRRVALAKLWLTQQKLWILDEPFTAIDNHGVGDLIMHIERHCSLGGMAIFTSHQTVESNKVRTLSLDQFKL.

In terms of domain architecture, ABC transporter spans 1 to 208 (MHLNQLVISH…KVRTLSLDQF (208 aa)). 38 to 45 (GHNGIGKT) serves as a coordination point for ATP.

It belongs to the ABC transporter superfamily. CcmA exporter (TC 3.A.1.107) family. In terms of assembly, the complex is composed of two ATP-binding proteins (CcmA) and two transmembrane proteins (CcmB).

The protein localises to the cell inner membrane. It carries out the reaction heme b(in) + ATP + H2O = heme b(out) + ADP + phosphate + H(+). Part of the ABC transporter complex CcmAB involved in the biogenesis of c-type cytochromes; once thought to export heme, this seems not to be the case, but its exact role is uncertain. Responsible for energy coupling to the transport system. The protein is Cytochrome c biogenesis ATP-binding export protein CcmA of Haemophilus ducreyi (strain 35000HP / ATCC 700724).